A 399-amino-acid polypeptide reads, in one-letter code: Keratin, type I cytoskeletal 19 (399 aa).

The segment at 1 to 78 (MTSYSYRQSS…ATSDGLLAGN (78 aa)) is head. Omega-N-methylarginine is present on arginine 7. Serine 14 and serine 22 each carry phosphoserine. Arginine 24 is modified (asymmetric dimethylarginine; alternate). Arginine 24 carries the post-translational modification Omega-N-methylarginine; alternate. Arginine 32 is modified (omega-N-methylarginine). Serine 35 and serine 40 each carry phosphoserine. 2 positions are modified to omega-N-methylarginine: arginine 43 and arginine 51. Phosphoserine occurs at positions 57 and 71. The interval 79 to 114 (EKLTMQNLNDRLASYLEKVRALEEANGDLEVKIRDW) is coil 1A. One can recognise an IF rod domain in the interval 79–390 (EKLTMQNLND…NLLEGQDAYF (312 aa)). The linker 1 stretch occupies residues 115–132 (YQKQGPGPARDYSHYFKT). Positions 133–224 (IEDLRDQILG…KNHEEEMSVL (92 aa)) are coil 1B. Positions 225 to 247 (KGQVGGQVSVEVDSAPGIDLAKI) are linker 12. The tract at residues 243 to 389 (DLAKILSDMR…RNLLEGQDAY (147 aa)) is necessary for interaction with PNN. Residues 248–386 (LSDMRSQYEV…ATYRNLLEGQ (139 aa)) form a coil 2 region. Threonine 322 is subject to Phosphothreonine. Residues 387–399 (DAYFNDLSLAKAL) form a rod-like helical tail region. Serine 394 carries the phosphoserine modification.

This sequence belongs to the intermediate filament family. As to quaternary structure, heterotetramer of two type I and two type II keratins. Interacts with PNN and the actin-binding domain of DMD.

Functionally, involved in the organization of myofibers. Together with KRT8, helps to link the contractile apparatus to dystrophin at the costameres of striated muscle. The protein is Keratin, type I cytoskeletal 19 (KRT19) of Bos taurus (Bovine).